The primary structure comprises 368 residues: tRNA 2-selenouridine synthase (368 aa).

Residues 15 to 138 enclose the Rhodanese domain; that stretch reads FLNQHPIMDV…MRQYLIGVIE (124 aa). Cysteine 98 (S-selanylcysteine intermediate) is an active-site residue.

The protein belongs to the SelU family. Monomer.

It catalyses the reaction 5-methylaminomethyl-2-thiouridine(34) in tRNA + selenophosphate + (2E)-geranyl diphosphate + H2O + H(+) = 5-methylaminomethyl-2-selenouridine(34) in tRNA + (2E)-thiogeraniol + phosphate + diphosphate. The enzyme catalyses 5-methylaminomethyl-2-thiouridine(34) in tRNA + (2E)-geranyl diphosphate = 5-methylaminomethyl-S-(2E)-geranyl-thiouridine(34) in tRNA + diphosphate. The catalysed reaction is 5-methylaminomethyl-S-(2E)-geranyl-thiouridine(34) in tRNA + selenophosphate + H(+) = 5-methylaminomethyl-2-(Se-phospho)selenouridine(34) in tRNA + (2E)-thiogeraniol. It carries out the reaction 5-methylaminomethyl-2-(Se-phospho)selenouridine(34) in tRNA + H2O = 5-methylaminomethyl-2-selenouridine(34) in tRNA + phosphate. Functionally, involved in the post-transcriptional modification of the uridine at the wobble position (U34) of tRNA(Lys), tRNA(Glu) and tRNA(Gln). Catalyzes the conversion of 2-thiouridine (S2U-RNA) to 2-selenouridine (Se2U-RNA). Acts in a two-step process involving geranylation of 2-thiouridine (S2U) to S-geranyl-2-thiouridine (geS2U) and subsequent selenation of the latter derivative to 2-selenouridine (Se2U) in the tRNA chain. In Shewanella baltica (strain OS155 / ATCC BAA-1091), this protein is tRNA 2-selenouridine synthase.